A 366-amino-acid polypeptide reads, in one-letter code: Mitogen-activated protein kinase CPK1 (366 aa).

Residues 17–302 (KLEEIVGEGA…SPSKRITVEE (286 aa)) form the Protein kinase domain. ATP is bound by residues 22–30 (VGEGAYGLV) and K45. D140 acts as the Proton acceptor in catalysis. Residue T181 is modified to Phosphothreonine. A TXY motif is present at residues 181 to 183 (TEY). A Phosphotyrosine modification is found at Y183.

This sequence belongs to the protein kinase superfamily. CMGC Ser/Thr protein kinase family. MAP kinase subfamily. Mg(2+) serves as cofactor. In terms of processing, dually phosphorylated on Thr-181 and Tyr-183, which activates the enzyme.

It catalyses the reaction L-seryl-[protein] + ATP = O-phospho-L-seryl-[protein] + ADP + H(+). It carries out the reaction L-threonyl-[protein] + ATP = O-phospho-L-threonyl-[protein] + ADP + H(+). Its activity is regulated as follows. Activated by tyrosine and threonine phosphorylation. Responds to activation by environmental stress by phosphorylating downstream targets. The chain is Mitogen-activated protein kinase CPK1 (CPK1) from Cryptococcus neoformans var. neoformans serotype D (strain B-3501A) (Filobasidiella neoformans).